The primary structure comprises 375 residues: Chaperone protein DnaJ (375 aa).

The J domain occupies 4 to 68 (DYYEVLGVGK…QKRAQYDRFG (65 aa)). The segment at 129 to 211 (GKETDVEIPK…CRGSGRVKVR (83 aa)) adopts a CR-type zinc-finger fold. Positions 142, 145, 159, 162, 185, 188, 199, and 202 each coordinate Zn(2+). CXXCXGXG motif repeat units lie at residues 142-149 (CDTCHGSG), 159-166 (CKTCSGTG), 185-192 (CTTCEGKG), and 199-206 (CSSCRGSG). Residues 349-375 (LSGEKPGQHGGEDEGFFEKMKRAFRGE) are disordered.

This sequence belongs to the DnaJ family. Homodimer. Zn(2+) serves as cofactor.

The protein resides in the cytoplasm. Functionally, participates actively in the response to hyperosmotic and heat shock by preventing the aggregation of stress-denatured proteins and by disaggregating proteins, also in an autonomous, DnaK-independent fashion. Unfolded proteins bind initially to DnaJ; upon interaction with the DnaJ-bound protein, DnaK hydrolyzes its bound ATP, resulting in the formation of a stable complex. GrpE releases ADP from DnaK; ATP binding to DnaK triggers the release of the substrate protein, thus completing the reaction cycle. Several rounds of ATP-dependent interactions between DnaJ, DnaK and GrpE are required for fully efficient folding. Also involved, together with DnaK and GrpE, in the DNA replication of plasmids through activation of initiation proteins. This chain is Chaperone protein DnaJ, found in Brevibacillus choshinensis.